A 58-amino-acid chain; its full sequence is Curromycin resistance protein (58 aa).

The disordered stretch occupies residues 1 to 37; the sequence is MSVVALGATSITPPHGPESQGRPFPARGPVRPSARAR. A compositionally biased stretch (low complexity) spans 25 to 37; the sequence is PARGPVRPSARAR.

In Streptomyces hygroscopicus, this protein is Curromycin resistance protein (cre).